The sequence spans 86 residues: UPF0180 protein CA_C1486 (86 aa).

This sequence belongs to the UPF0180 family.

This Clostridium acetobutylicum (strain ATCC 824 / DSM 792 / JCM 1419 / IAM 19013 / LMG 5710 / NBRC 13948 / NRRL B-527 / VKM B-1787 / 2291 / W) protein is UPF0180 protein CA_C1486.